Here is a 261-residue protein sequence, read N- to C-terminus: Cytochrome c oxidase subunit 3 (261 aa).

Residues 1-15 (MTHQTHAYHMVNPSP) lie on the Mitochondrial matrix side of the membrane. A helical membrane pass occupies residues 16–34 (WPLTGALSALLMTSGLTMW). At 35–40 (FHFNSM) the chain is on the mitochondrial intermembrane side. A helical transmembrane segment spans residues 41–66 (TLLMIGLTTNMLTMYQWWRDVIREST). Residues 67–72 (FQGHHT) are Mitochondrial matrix-facing. Residues 73-105 (PAVQKGLRYGMILFIISEVLFFTGFFWAFYHSS) form a helical membrane-spanning segment. Residues 106–128 (LAPTPELGGCWPPTGIHPLNPLE) lie on the Mitochondrial intermembrane side of the membrane. The chain crosses the membrane as a helical span at residues 129–152 (VPLLNTSVLLASGVSITWAHHSLM). The Mitochondrial matrix portion of the chain corresponds to 153-155 (EGD). Residues 156-183 (RKHMLQALFITITLGVYFTLLQASEYYE) traverse the membrane as a helical segment. The Mitochondrial intermembrane segment spans residues 184–190 (APFTISD). A helical transmembrane segment spans residues 191 to 223 (GVYGSTFFVATGFHGLHVIIGSTFLIVCFFRQL). The Mitochondrial matrix portion of the chain corresponds to 224–232 (KFHFTSNHH). The chain crosses the membrane as a helical span at residues 233–256 (FGFEAAAWYWHFVDVVWLFLYVSI). Over 257–261 (YWWGS) the chain is Mitochondrial intermembrane.

It belongs to the cytochrome c oxidase subunit 3 family. Component of the cytochrome c oxidase (complex IV, CIV), a multisubunit enzyme composed of 14 subunits. The complex is composed of a catalytic core of 3 subunits MT-CO1, MT-CO2 and MT-CO3, encoded in the mitochondrial DNA, and 11 supernumerary subunits COX4I1 (or COX4I2), COX5A, COX5B, COX6A2 (or COX6A1), COX6B1 (or COX6B2), COX6C, COX7A1 (or COX7A2), COX7B, COX7C, COX8B and NDUFA4, which are encoded in the nuclear genome. The complex exists as a monomer or a dimer and forms supercomplexes (SCs) in the inner mitochondrial membrane with NADH-ubiquinone oxidoreductase (complex I, CI) and ubiquinol-cytochrome c oxidoreductase (cytochrome b-c1 complex, complex III, CIII), resulting in different assemblies (supercomplex SCI(1)III(2)IV(1) and megacomplex MCI(2)III(2)IV(2)).

Its subcellular location is the mitochondrion inner membrane. The catalysed reaction is 4 Fe(II)-[cytochrome c] + O2 + 8 H(+)(in) = 4 Fe(III)-[cytochrome c] + 2 H2O + 4 H(+)(out). Component of the cytochrome c oxidase, the last enzyme in the mitochondrial electron transport chain which drives oxidative phosphorylation. The respiratory chain contains 3 multisubunit complexes succinate dehydrogenase (complex II, CII), ubiquinol-cytochrome c oxidoreductase (cytochrome b-c1 complex, complex III, CIII) and cytochrome c oxidase (complex IV, CIV), that cooperate to transfer electrons derived from NADH and succinate to molecular oxygen, creating an electrochemical gradient over the inner membrane that drives transmembrane transport and the ATP synthase. Cytochrome c oxidase is the component of the respiratory chain that catalyzes the reduction of oxygen to water. Electrons originating from reduced cytochrome c in the intermembrane space (IMS) are transferred via the dinuclear copper A center (CU(A)) of subunit 2 and heme A of subunit 1 to the active site in subunit 1, a binuclear center (BNC) formed by heme A3 and copper B (CU(B)). The BNC reduces molecular oxygen to 2 water molecules using 4 electrons from cytochrome c in the IMS and 4 protons from the mitochondrial matrix. The polypeptide is Cytochrome c oxidase subunit 3 (MT-CO3) (Bos taurus (Bovine)).